A 373-amino-acid polypeptide reads, in one-letter code: CCA-adding enzyme (373 aa).

Residues glycine 8 and arginine 11 each coordinate ATP. 2 residues coordinate CTP: glycine 8 and arginine 11. Residues aspartate 21 and aspartate 23 each contribute to the Mg(2+) site. Arginine 91, arginine 137, and arginine 140 together coordinate ATP. 3 residues coordinate CTP: arginine 91, arginine 137, and arginine 140.

It belongs to the tRNA nucleotidyltransferase/poly(A) polymerase family. Bacterial CCA-adding enzyme type 2 subfamily. Requires Mg(2+) as cofactor.

The catalysed reaction is a tRNA precursor + 2 CTP + ATP = a tRNA with a 3' CCA end + 3 diphosphate. It carries out the reaction a tRNA with a 3' CCA end + 2 CTP + ATP = a tRNA with a 3' CCACCA end + 3 diphosphate. In terms of biological role, catalyzes the addition and repair of the essential 3'-terminal CCA sequence in tRNAs without using a nucleic acid template. Adds these three nucleotides in the order of C, C, and A to the tRNA nucleotide-73, using CTP and ATP as substrates and producing inorganic pyrophosphate. tRNA 3'-terminal CCA addition is required both for tRNA processing and repair. Also involved in tRNA surveillance by mediating tandem CCA addition to generate a CCACCA at the 3' terminus of unstable tRNAs. While stable tRNAs receive only 3'-terminal CCA, unstable tRNAs are marked with CCACCA and rapidly degraded. This Marinobacter nauticus (strain ATCC 700491 / DSM 11845 / VT8) (Marinobacter aquaeolei) protein is CCA-adding enzyme.